A 65-amino-acid chain; its full sequence is MAEDKKKAPKDSFFKGVISEMEKTSWPTKEEILKYTTIVIVTVVFFLIFFYALDLGIGKLIELIS.

The helical transmembrane segment at 38–58 (IVIVTVVFFLIFFYALDLGIG) threads the bilayer.

It belongs to the SecE/SEC61-gamma family. In terms of assembly, component of the Sec protein translocase complex. Heterotrimer consisting of SecY, SecE and SecG subunits. The heterotrimers can form oligomers, although 1 heterotrimer is thought to be able to translocate proteins. Interacts with the ribosome. Interacts with SecDF, and other proteins may be involved. Interacts with SecA.

It localises to the cell membrane. Essential subunit of the Sec protein translocation channel SecYEG. Clamps together the 2 halves of SecY. May contact the channel plug during translocation. The sequence is that of Protein translocase subunit SecE from Staphylococcus carnosus (strain TM300).